Reading from the N-terminus, the 378-residue chain is Small ribosomal subunit protein bS1 (378 aa).

5 consecutive S1 motif domains span residues 1-66, 87-155, 172-242, 259-329, and 346-378; these read ETVT…VSRR, GMEV…LGLK, GTKL…LGLK, GDRV…LGVK, and GAIV…ASEA.

Belongs to the bacterial ribosomal protein bS1 family.

Its function is as follows. Binds mRNA; thus facilitating recognition of the initiation point. It is needed to translate mRNA with a short Shine-Dalgarno (SD) purine-rich sequence. In Providencia sp, this protein is Small ribosomal subunit protein bS1 (rpsA).